The primary structure comprises 236 residues: Uridylate kinase (236 aa).

10–13 (KLSG) provides a ligand contact to ATP. UMP is bound at residue G52. ATP contacts are provided by G53 and R57. UMP contacts are provided by residues D72 and 133–140 (TGNPFFTT). Residues T160, Y166, and D169 each contribute to the ATP site.

This sequence belongs to the UMP kinase family. As to quaternary structure, homohexamer.

Its subcellular location is the cytoplasm. It catalyses the reaction UMP + ATP = UDP + ADP. It functions in the pathway pyrimidine metabolism; CTP biosynthesis via de novo pathway; UDP from UMP (UMPK route): step 1/1. With respect to regulation, inhibited by UTP. Functionally, catalyzes the reversible phosphorylation of UMP to UDP. This chain is Uridylate kinase, found in Phocaeicola vulgatus (strain ATCC 8482 / DSM 1447 / JCM 5826 / CCUG 4940 / NBRC 14291 / NCTC 11154) (Bacteroides vulgatus).